The primary structure comprises 425 residues: Protein CLP1 homolog (425 aa).

ATP contacts are provided by residues glutamate 18, lysine 59, and 121 to 126; that span reads DVGKST.

The protein belongs to the Clp1 family. Clp1 subfamily.

Its subcellular location is the nucleus. Required for endonucleolytic cleavage during polyadenylation-dependent pre-mRNA 3'-end formation. The chain is Protein CLP1 homolog (cbc) from Drosophila mojavensis (Fruit fly).